A 332-amino-acid polypeptide reads, in one-letter code: Tsukubadiene synthase (332 aa).

2 residues coordinate Mg(2+): Asp75 and Glu80. The DDXXXE motif signature appears at 75 to 80 (DDHLDE). Arg165 lines the substrate pocket. The Mg(2+) site is built by Ser212, Ser216, and Glu220. An SXXXSXXXE motif motif is present at residues 212–220 (SDLHSFQLE). 298 to 299 (RY) is a substrate binding site.

Belongs to the terpene synthase family. It depends on Mg(2+) as a cofactor.

It carries out the reaction (2E,6E,10E)-geranylgeranyl diphosphate = tsukubadiene + diphosphate. Catalyzes the formation of the 5-9-5 ring skeleton (3S,6S,11R,14S)-tsukubadiene from geranylgeranyl diphosphate (GGPP) via a 1,11-cyclization and a 10Re,14Re-cyclization. The protein is Tsukubadiene synthase of Streptomyces tsukubensis (strain DSM 42081 / NBRC 108919 / NRRL 18488 / 9993).